Consider the following 367-residue polypeptide: Anthranilate phosphoribosyltransferase (367 aa).

5-phospho-alpha-D-ribose 1-diphosphate is bound by residues Gly105, 108-109 (GD), Thr113, 115-118 (NIST), 133-141 (KHGNRAASS), and Gly145. Gly105 serves as a coordination point for anthranilate. Position 117 (Ser117) interacts with Mg(2+). Residue Asn136 participates in anthranilate binding. Arg191 is an anthranilate binding site. Mg(2+) is bound by residues Asp249 and Glu250.

This sequence belongs to the anthranilate phosphoribosyltransferase family. Homodimer. The cofactor is Mg(2+).

The catalysed reaction is N-(5-phospho-beta-D-ribosyl)anthranilate + diphosphate = 5-phospho-alpha-D-ribose 1-diphosphate + anthranilate. It participates in amino-acid biosynthesis; L-tryptophan biosynthesis; L-tryptophan from chorismate: step 2/5. Its function is as follows. Catalyzes the transfer of the phosphoribosyl group of 5-phosphorylribose-1-pyrophosphate (PRPP) to anthranilate to yield N-(5'-phosphoribosyl)-anthranilate (PRA). The chain is Anthranilate phosphoribosyltransferase from Corynebacterium jeikeium (strain K411).